Consider the following 235-residue polypeptide: NAD(P)H-hydrate epimerase (235 aa).

Residues 18-221 (AAKIDEQLFS…GLVEEHGLQM (204 aa)) form the YjeF N-terminal domain. 65–69 (NNGGD) lines the (6S)-NADPHX pocket. K(+) is bound by residues asparagine 66 and aspartate 127. Residues 131-137 (GFSFKPP) and aspartate 160 each bind (6S)-NADPHX. A K(+)-binding site is contributed by serine 163.

Belongs to the NnrE/AIBP family. Requires K(+) as cofactor.

The catalysed reaction is (6R)-NADHX = (6S)-NADHX. The enzyme catalyses (6R)-NADPHX = (6S)-NADPHX. Its function is as follows. Catalyzes the epimerization of the S- and R-forms of NAD(P)HX, a damaged form of NAD(P)H that is a result of enzymatic or heat-dependent hydration. This is a prerequisite for the S-specific NAD(P)H-hydrate dehydratase to allow the repair of both epimers of NAD(P)HX. The protein is NAD(P)H-hydrate epimerase of Caenorhabditis briggsae.